The sequence spans 517 residues: L-amino-acid oxidase (517 aa).

The signal sequence occupies residues Met1 to Cys18. An intrachain disulfide couples Cys29 to Cys192. FAD-binding positions include Met62–Ala63, Glu82–Ala83, Arg90, and Gly106–Arg109. Arg109 contributes to the substrate binding site. N-linked (GlcNAc...) asparagine glycosylation occurs at Asn191. FAD is bound at residue Val280. Residues Cys350 and Cys431 are joined by a disulfide bond. Tyr391 is a binding site for substrate. FAD is bound by residues Glu476 and Gly483–Thr488. Residue Gly483–Trp484 participates in substrate binding.

It belongs to the flavin monoamine oxidase family. FIG1 subfamily. Homodimer; non-covalently linked. Requires FAD as cofactor. N-glycosylated. As to expression, expressed by the venom gland.

The protein localises to the secreted. The catalysed reaction is an L-alpha-amino acid + O2 + H2O = a 2-oxocarboxylate + H2O2 + NH4(+). Its function is as follows. Catalyzes an oxidative deamination of predominantly hydrophobic and aromatic L-amino acids, thus producing hydrogen peroxide that may contribute to the diverse toxic effects of this enzyme. Exhibits diverse biological activities, such as hemorrhage, hemolysis, edema, apoptosis of vascular endothelial cells or tumor cell lines, antibacterial and antiparasitic activities, as well as regulation of platelet aggregation. Its effect on platelets is controversial, since it either induces aggregation or inhibits agonist-induced aggregation. These different effects are probably due to different experimental conditions. The chain is L-amino-acid oxidase from Demansia vestigiata (Lesser black whip snake).